Consider the following 204-residue polypeptide: Glideosome-associated protein 45 (204 aa).

Residues 1-86 (MGNKCSRSKV…KEEIDYATQE (86 aa)) are disordered. Glycine 2 is lipidated: N-myristoyl glycine. Residues 2-29 (GNKCSRSKVKEPKRKDIDELAERENLKK) form a targets GAP45 to the cell membrane; however, dispensable for the formation of the glideosome complex and the association with the inner membrane complex region. A compositionally biased stretch (basic and acidic residues) spans 9 to 53 (KVKEPKRKDIDELAERENLKKQSEEIIEEKPEEVVEQVEETHEEP). A compositionally biased stretch (acidic residues) spans 54–73 (LEQEQELDEQKIEEEEEEPE). Serine 89 carries the post-translational modification Phosphoserine; by CPK10. Serine 103 carries the post-translational modification Phosphoserine; by CPK10 and PKB. Serine 149 is modified (phosphoserine; by CPK10).

In terms of assembly, component of the glideosome complex composed of GAP50, GAP45, MTIP and MyoA; the complex is formed during the late schizont stage and in merozoites. MyoA, MTIP and GAP45 probably form an initial complex in the cytoplasm which is then recruited to the outer face of the inner membrane complex via the interaction with GAP50. Interacts with GAP50; the interaction is independent of GAP45 phosphorylation status and can also occur independently of the formation of the glideosome complex. Phosphorylated at multiple sites. Phosphorylation increases during the schizont stage and peaks in segmented merozoites. May be phosphorylated by PKB. In schizonts, phosphorylated at Ser-89 and Ser-149 in response to phospholipase C-mediated calcium release. Phosphorylation at Ser-149 begins in early schizonts while phosphorylation at Ser-103 begins in late schizonts. Phosphorylation at Ser-89, Ser-103 and Ser-149 appears to be dispensable for GAP45 inner membrane complex localization or GAP45 inclusion in the glideosome complex. Phosphorylation is not required for interaction with GAP50; however, it may regulate the interaction with MTIP and MyoA. Post-translationally, N-myristoylated by NMT. N-myristoylation may contribute to the targeting of GAP45 to the inner membrane complex with the subsequent palmitoylation strengthening the interaction with the membrane. In terms of processing, palmitoylated. Palmitoylation appears to follow N-myristoylation and may strengthen the interaction with the inner membrane complex.

It localises to the inner membrane complex. Component of the glideosome complex, an inner membrane complex structure involved in parasite gliding motility and host cell invasion. During the asexual blood stage, required in schizonts to recruit MTIP and MyoA to the inner membrane complex where they assemble with GAP50 to form the glideosome complex. By regulating the formation of the glideosome, plays an essential role during merozoite invasion of host erythrocytes. The polypeptide is Glideosome-associated protein 45 (Plasmodium falciparum (isolate 3D7)).